The primary structure comprises 287 residues: Shikimate dehydrogenase (NADP(+)) (287 aa).

Shikimate contacts are provided by residues 18-20 (SYS) and threonine 66. Lysine 70 functions as the Proton acceptor in the catalytic mechanism. Glutamate 82 lines the NADP(+) pocket. 2 residues coordinate shikimate: asparagine 91 and aspartate 106. NADP(+)-binding positions include 130 to 134 (GSGGA) and methionine 228. A shikimate-binding site is contributed by tyrosine 230. Glycine 251 contacts NADP(+).

This sequence belongs to the shikimate dehydrogenase family. In terms of assembly, homodimer.

It catalyses the reaction shikimate + NADP(+) = 3-dehydroshikimate + NADPH + H(+). Its pathway is metabolic intermediate biosynthesis; chorismate biosynthesis; chorismate from D-erythrose 4-phosphate and phosphoenolpyruvate: step 4/7. In terms of biological role, involved in the biosynthesis of the chorismate, which leads to the biosynthesis of aromatic amino acids. Catalyzes the reversible NADPH linked reduction of 3-dehydroshikimate (DHSA) to yield shikimate (SA). The protein is Shikimate dehydrogenase (NADP(+)) of Chlorobium chlorochromatii (strain CaD3).